We begin with the raw amino-acid sequence, 337 residues long: 5-formaminoimidazole-4-carboxamide-1-(beta)-D-ribofuranosyl 5'-monophosphate synthetase (337 aa).

The 5-amino-1-(5-phospho-beta-D-ribosyl)imidazole-4-carboxamide site is built by His-14 and Ser-74. The ATP-grasp domain occupies 81 to 328 (VELVERMKVP…IAREIRLAIE (248 aa)). Residues 125-185 (PDDI…VPVY) and Glu-207 contribute to the ATP site. Residue Asn-235 coordinates 5-amino-1-(5-phospho-beta-D-ribosyl)imidazole-4-carboxamide. Glu-273 and Glu-286 together coordinate Mg(2+).

This sequence belongs to the phosphohexose mutase family. Mg(2+) serves as cofactor. Mn(2+) is required as a cofactor.

The enzyme catalyses 5-amino-1-(5-phospho-beta-D-ribosyl)imidazole-4-carboxamide + formate + ATP = 5-formamido-1-(5-phospho-D-ribosyl)imidazole-4-carboxamide + ADP + phosphate. It participates in purine metabolism; IMP biosynthesis via de novo pathway; 5-formamido-1-(5-phospho-D-ribosyl)imidazole-4-carboxamide from 5-amino-1-(5-phospho-D-ribosyl)imidazole-4-carboxamide (formate route): step 1/1. Catalyzes the ATP- and formate-dependent formylation of 5-aminoimidazole-4-carboxamide-1-beta-d-ribofuranosyl 5'-monophosphate (AICAR) to 5-formaminoimidazole-4-carboxamide-1-beta-d-ribofuranosyl 5'-monophosphate (FAICAR) in the absence of folates. This Pyrococcus abyssi (strain GE5 / Orsay) protein is 5-formaminoimidazole-4-carboxamide-1-(beta)-D-ribofuranosyl 5'-monophosphate synthetase.